The following is a 616-amino-acid chain: Zinc metalloproteinase nas-36 (616 aa).

The first 21 residues, Met-1–Ala-21, serve as a signal peptide directing secretion. Residues Gln-22 to Arg-125 constitute a propeptide that is removed on maturation. The region spanning Ser-126–Lys-321 is the Peptidase M12A domain. 9 disulfide bridges follow: Cys-168–Cys-320, Cys-191–Cys-210, Cys-324–Cys-345, Cys-347–Cys-356, Cys-367–Cys-396, Cys-424–Cys-444, Cys-518–Cys-549, Cys-522–Cys-554, and Cys-534–Cys-539. Residue Asn-173 is glycosylated (N-linked (GlcNAc...) asparagine). His-218 lines the Zn(2+) pocket. Residue Glu-219 is part of the active site. Residues His-222 and His-228 each coordinate Zn(2+). An EGF-like domain is found at Asn-316–Glu-357. The CUB domain maps to Cys-367–Thr-481. The TSP type-1 domain maps to Pro-506–Pro-555.

Zn(2+) is required as a cofactor.

The protein resides in the secreted. Functionally, mtalloprotease. Involved in molting, a process during larval stages in which a new cuticle is formed and the old cuticle is shed. This Caenorhabditis briggsae protein is Zinc metalloproteinase nas-36.